A 232-amino-acid polypeptide reads, in one-letter code: GTP cyclohydrolase III (232 aa).

It belongs to the archaeal-type GTP cyclohydrolase family.

The enzyme catalyses GTP + 3 H2O = 2-amino-5-formylamino-6-(5-phospho-D-ribosylamino)pyrimidin-4(3H)-one + 2 phosphate + 2 H(+). In terms of biological role, catalyzes the formation of 2-amino-5-formylamino-6-ribofuranosylamino-4(3H)-pyrimidinone ribonucleotide monophosphate and inorganic phosphate from GTP. Also has an independent pyrophosphate phosphohydrolase activity. The chain is GTP cyclohydrolase III from Saccharolobus islandicus (strain Y.N.15.51 / Yellowstone #2) (Sulfolobus islandicus).